We begin with the raw amino-acid sequence, 490 residues long: Colicin-5 (490 aa).

Over residues 1–20 the composition is skewed to polar residues; sequence MDKVTDNSPDVESTESTEGS. Disordered stretches follow at residues 1-29 and 146-171; these read MDKVTDNSPDVESTESTEGSFPTVGVDTG and QKAREEAEAAEKALREAERQRDEIAR. Over residues 146–170 the composition is skewed to basic and acidic residues; the sequence is QKAREEAEAAEKALREAERQRDEIA. A helical transmembrane segment spans residues 447-467; it reads IVALMFSFIVGVPLGFWGIAI.

Belongs to the channel forming colicin family.

Its subcellular location is the host membrane. Its function is as follows. This colicin is a channel-forming colicin. This class of transmembrane toxins depolarize the cytoplasmic membrane, leading to dissipation of cellular energy. In terms of biological role, colicins are polypeptide toxins produced by and active against E.coli and closely related bacteria. In Escherichia coli, this protein is Colicin-5 (cfa).